A 359-amino-acid chain; its full sequence is Palmitoyltransferase ERF2 (359 aa).

The segment at 1–21 (MALVSRRSTRSESTSITKEEH) is disordered. Topologically, residues 1-75 (MALVSRRSTR…RFRTVKGAKP (75 aa)) are cytoplasmic. Residues 76-96 (LWLGVLLAIVCPMVLFSIFEA) traverse the membrane as a helical segment. Residues 97-104 (HKLWHTQN) are Lumenal-facing. A helical transmembrane segment spans residues 105 to 125 (GYKVLVIFFYYFWVITLASFI). At 126–217 (RTATSDPGVL…NCIGKRNYRF (92 aa)) the chain is on the cytoplasmic side. One can recognise a DHHC domain in the interval 173-223 (KYCPSCRIWRPPRSSHCSTCNVCVMVHDHHCIWVNNCIGKRNYRFFLIFLL). Residue Cys203 is the S-palmitoyl cysteine intermediate of the active site. A helical membrane pass occupies residues 218–238 (FLIFLLGAILSSVILLTNCAI). Topologically, residues 239 to 250 (HIARESGGPRDC) are lumenal. The helical transmembrane segment at 251 to 271 (PVAILLLCYAGLTLWYPAILF) threads the bilayer. The Cytoplasmic portion of the chain corresponds to 272-359 (TYHIFMAGNQ…AHSFEKIQKI (88 aa)).

Belongs to the DHHC palmitoyltransferase family. ERF2/ZDHHC9 subfamily. Interacts with SHR5. Autopalmitoylated.

Its subcellular location is the endoplasmic reticulum membrane. The enzyme catalyses L-cysteinyl-[protein] + hexadecanoyl-CoA = S-hexadecanoyl-L-cysteinyl-[protein] + CoA. The ERF2-SHR5 complex is a palmitoyltransferase specific for Ras proteins. Palmitoylates RAS2, which is required for its proper plasma membrane localization. This chain is Palmitoyltransferase ERF2 (ERF2), found in Saccharomyces cerevisiae (strain ATCC 204508 / S288c) (Baker's yeast).